Consider the following 816-residue polypeptide: Leucine--tRNA ligase (816 aa).

The 'HIGH' region motif lies at serine 40–histidine 51. Positions lysine 576 to serine 580 match the 'KMSKS' region motif. Position 579 (lysine 579) interacts with ATP.

The protein belongs to the class-I aminoacyl-tRNA synthetase family.

The protein localises to the cytoplasm. It carries out the reaction tRNA(Leu) + L-leucine + ATP = L-leucyl-tRNA(Leu) + AMP + diphosphate. The protein is Leucine--tRNA ligase of Clostridium perfringens (strain 13 / Type A).